The sequence spans 209 residues: Adenylate kinase (209 aa).

Gly10–Thr15 is a binding site for ATP. Residues Ser30–Val59 are NMP. AMP contacts are provided by residues Thr31, Arg36, Ala57 to Val59, Gly85 to Arg88, and Gln92. The interval Gly121–Asp158 is LID. An ATP-binding site is contributed by Arg122. The Zn(2+) site is built by Cys125 and Cys128. An ATP-binding site is contributed by Ser131 to Phe132. Zn(2+) contacts are provided by Cys145 and Cys148. AMP-binding residues include Arg155 and Arg166. Pro194 provides a ligand contact to ATP.

It belongs to the adenylate kinase family. In terms of assembly, monomer.

The protein localises to the cytoplasm. It carries out the reaction AMP + ATP = 2 ADP. It participates in purine metabolism; AMP biosynthesis via salvage pathway; AMP from ADP: step 1/1. Functionally, catalyzes the reversible transfer of the terminal phosphate group between ATP and AMP. Plays an important role in cellular energy homeostasis and in adenine nucleotide metabolism. The polypeptide is Adenylate kinase (Treponema denticola (strain ATCC 35405 / DSM 14222 / CIP 103919 / JCM 8153 / KCTC 15104)).